The following is a 969-amino-acid chain: RNA polymerase-associated protein RapA (969 aa).

In terms of domain architecture, Helicase ATP-binding spans 164 to 334; that stretch reads EVGRRHAPRV…FARLRLLDPD (171 aa). Position 177–184 (177–184) interacts with ATP; sequence DEVGLGKT. Positions 280-283 match the DEAH box motif; the sequence is DEAH. The Helicase C-terminal domain occupies 492-646; sequence RVNWLLEKVK…TCPTGRAVYD (155 aa).

This sequence belongs to the SNF2/RAD54 helicase family. RapA subfamily. In terms of assembly, interacts with the RNAP. Has a higher affinity for the core RNAP than for the holoenzyme. Its ATPase activity is stimulated by binding to RNAP.

Functionally, transcription regulator that activates transcription by stimulating RNA polymerase (RNAP) recycling in case of stress conditions such as supercoiled DNA or high salt concentrations. Probably acts by releasing the RNAP, when it is trapped or immobilized on tightly supercoiled DNA. Does not activate transcription on linear DNA. Probably not involved in DNA repair. This chain is RNA polymerase-associated protein RapA, found in Vibrio campbellii (strain ATCC BAA-1116).